A 108-amino-acid chain; its full sequence is Ig kappa chain V-V region HP 123E6 (108 aa).

The framework-1 stretch occupies residues 1–23 (DIQMTQSTSSLSASLGDRVTISC). The cysteines at positions 23 and 88 are disulfide-linked. The complementarity-determining-1 stretch occupies residues 24 to 34 (RASQDISNYLN). Positions 35–49 (WYQQKPDGTVKLLIY) are framework-2. The tract at residues 50–56 (YTSRLHS) is complementarity-determining-2. The interval 57 to 88 (GVPSRFSGSGSGTDYSLTISNLEQEDIATYFC) is framework-3. Residues 89-97 (QQGYMLPRT) form a complementarity-determining-3 region. Residues 98 to 108 (FGGGTKLEIKR) are framework-4.

The chain is Ig kappa chain V-V region HP 123E6 from Mus musculus (Mouse).